The primary structure comprises 333 residues: Fructose-1,6-bisphosphatase class 1 (333 aa).

Residues Glu-89, Asp-112, Leu-114, and Asp-115 each coordinate Mg(2+). Substrate is bound by residues 115–118 (DGSS), Asn-208, Tyr-241, and Lys-271. A Mg(2+)-binding site is contributed by Glu-277.

It belongs to the FBPase class 1 family. As to quaternary structure, homotetramer. Mg(2+) is required as a cofactor.

The protein localises to the cytoplasm. It carries out the reaction beta-D-fructose 1,6-bisphosphate + H2O = beta-D-fructose 6-phosphate + phosphate. It functions in the pathway carbohydrate biosynthesis; gluconeogenesis. This Haemophilus influenzae (strain ATCC 51907 / DSM 11121 / KW20 / Rd) protein is Fructose-1,6-bisphosphatase class 1.